Consider the following 92-residue polypeptide: Bombyxin A-4 (92 aa).

The N-terminal stretch at 1 to 19 (MKILLAIALMLSTVMWVST) is a signal peptide. The residue at position 20 (Gln-20) is a Pyrrolidone carboxylic acid. 3 disulfide bridges follow: Cys-29-Cys-79, Cys-41-Cys-92, and Cys-78-Cys-83. Positions 50-70 (SGAQFASYGSAWLMPYSEGRG) are cleaved as a propeptide — c peptide like.

Belongs to the insulin family. Heterodimer of a B chain and an A chain linked by two disulfide bonds.

It localises to the secreted. Brain peptide responsible for activation of prothoracic glands to produce ecdysone in insects. The polypeptide is Bombyxin A-4 (BBXA4) (Bombyx mori (Silk moth)).